Consider the following 380-residue polypeptide: Crotonobetainyl-CoA reductase (380 aa).

The protein belongs to the acyl-CoA dehydrogenase family. Homotetramer. The cofactor is FAD.

The protein localises to the cytoplasm. It carries out the reaction 4-(trimethylamino)butanoyl-CoA + oxidized [electron-transfer flavoprotein] + H(+) = crotonobetainyl-CoA + reduced [electron-transfer flavoprotein]. The protein operates within amine and polyamine metabolism; carnitine metabolism. Catalyzes the reduction of crotonobetainyl-CoA to gamma-butyrobetainyl-CoA. In Escherichia coli (strain UTI89 / UPEC), this protein is Crotonobetainyl-CoA reductase.